The primary structure comprises 248 residues: Delayed minus-nitrogen induction protein 2 (248 aa).

4 consecutive transmembrane segments (helical) span residues 26 to 46 (IFSN…CCSC), 110 to 130 (VHPV…VLTI), 144 to 164 (ISCL…MALA), and 186 to 206 (GVAA…FSLI).

This sequence belongs to the SUR7 family.

It is found in the membrane. This Schizosaccharomyces pombe (strain 972 / ATCC 24843) (Fission yeast) protein is Delayed minus-nitrogen induction protein 2 (dni2).